Consider the following 263-residue polypeptide: Diphthine synthase (263 aa).

S-adenosyl-L-methionine is bound by residues leucine 11, aspartate 89, alanine 92, 117–118 (SV), leucine 166, and leucine 208.

Belongs to the diphthine synthase family. As to quaternary structure, homodimer.

The catalysed reaction is 2-[(3S)-amino-3-carboxypropyl]-L-histidyl-[translation elongation factor 2] + 3 S-adenosyl-L-methionine = diphthine-[translation elongation factor 2] + 3 S-adenosyl-L-homocysteine + 3 H(+). Its pathway is protein modification; peptidyl-diphthamide biosynthesis. In terms of biological role, S-adenosyl-L-methionine-dependent methyltransferase that catalyzes the trimethylation of the amino group of the modified target histidine residue in translation elongation factor 2 (EF-2), to form an intermediate called diphthine. The three successive methylation reactions represent the second step of diphthamide biosynthesis. The chain is Diphthine synthase from Methanopyrus kandleri (strain AV19 / DSM 6324 / JCM 9639 / NBRC 100938).